The chain runs to 190 residues: Endoribonuclease YbeY (190 aa).

Positions 147, 151, and 157 each coordinate Zn(2+).

The protein belongs to the endoribonuclease YbeY family. Zn(2+) is required as a cofactor.

The protein localises to the cytoplasm. Single strand-specific metallo-endoribonuclease involved in late-stage 70S ribosome quality control and in maturation of the 3' terminus of the 16S rRNA. This is Endoribonuclease YbeY from Nitrobacter winogradskyi (strain ATCC 25391 / DSM 10237 / CIP 104748 / NCIMB 11846 / Nb-255).